Reading from the N-terminus, the 223-residue chain is Guanylate kinase (223 aa).

Positions 6–183 (GRLFVMTGAS…AVADFLAILT (178 aa)) constitute a Guanylate kinase-like domain. 13–20 (GASGVGKG) serves as a coordination point for ATP.

Belongs to the guanylate kinase family.

Its subcellular location is the cytoplasm. It carries out the reaction GMP + ATP = GDP + ADP. In terms of biological role, essential for recycling GMP and indirectly, cGMP. The sequence is that of Guanylate kinase from Thermus thermophilus (strain ATCC 27634 / DSM 579 / HB8).